The chain runs to 248 residues: NLP effector protein Pc121494 (248 aa).

Residues 1–19 (MKFIAVLIAAIASLSAVQA) form the signal peptide. Positions 124-130 (GHRNGWE) match the Hepta-peptide GHRHDWE motif motif. N-linked (GlcNAc...) asparagine glycosylation occurs at N143.

The protein belongs to the Necrosis inducing protein (NPP1) family.

The protein localises to the secreted. Its function is as follows. Secreted effector that contributes strongly to virulence during infection by P.capsici. This chain is NLP effector protein Pc121494, found in Phytophthora capsici.